The sequence spans 78 residues: Acyl carrier protein (78 aa).

The 76-residue stretch at 2–77 folds into the Carrier domain; the sequence is SDIAERVKKI…DAIKFLEKNS (76 aa). Serine 37 is subject to O-(pantetheine 4'-phosphoryl)serine.

Belongs to the acyl carrier protein (ACP) family. 4'-phosphopantetheine is transferred from CoA to a specific serine of apo-ACP by AcpS. This modification is essential for activity because fatty acids are bound in thioester linkage to the sulfhydryl of the prosthetic group.

The protein localises to the cytoplasm. Its pathway is lipid metabolism; fatty acid biosynthesis. In terms of biological role, carrier of the growing fatty acid chain in fatty acid biosynthesis. This Methylorubrum extorquens (strain CM4 / NCIMB 13688) (Methylobacterium extorquens) protein is Acyl carrier protein.